Here is an 859-residue protein sequence, read N- to C-terminus: Bifunctional uridylyltransferase/uridylyl-removing enzyme (859 aa).

The tract at residues 1–325 (MSAHAAPSPE…PATSGITRVL (325 aa)) is uridylyltransferase. The tract at residues 326–682 (SHDRFVEKQG…ARPSPIGDAL (357 aa)) is uridylyl-removing. The HD domain occupies 444 to 566 (VDQHILMVLR…VGNERYLTAL (123 aa)). ACT domains lie at 683–762 (QVLV…PEPS) and 791–859 (ILSV…AIAV).

The protein belongs to the GlnD family. Mg(2+) is required as a cofactor.

The catalysed reaction is [protein-PII]-L-tyrosine + UTP = [protein-PII]-uridylyl-L-tyrosine + diphosphate. It carries out the reaction [protein-PII]-uridylyl-L-tyrosine + H2O = [protein-PII]-L-tyrosine + UMP + H(+). Uridylyltransferase (UTase) activity is inhibited by glutamine, while glutamine activates uridylyl-removing (UR) activity. Functionally, modifies, by uridylylation and deuridylylation, the PII regulatory proteins (GlnB and homologs), in response to the nitrogen status of the cell that GlnD senses through the glutamine level. Under low glutamine levels, catalyzes the conversion of the PII proteins and UTP to PII-UMP and PPi, while under higher glutamine levels, GlnD hydrolyzes PII-UMP to PII and UMP (deuridylylation). Thus, controls uridylylation state and activity of the PII proteins, and plays an important role in the regulation of nitrogen fixation and metabolism. The polypeptide is Bifunctional uridylyltransferase/uridylyl-removing enzyme (Burkholderia vietnamiensis (strain G4 / LMG 22486) (Burkholderia cepacia (strain R1808))).